The sequence spans 183 residues: MATKIRLQRNGRKSYAFYSIVIADVRAPRDGKFTEKIGTYNPNTNPATVDLNFERALHWVMCGAQPTDTVRNILSKEGVYMKKHLLGGVAKGAFTEAEAEAKFEAWKNNKQSGLATLKAKLDEAKKAEAKARLEAEKKVNEEIAKKVAEKKAAEAAAKAEAEAANAPAEEAPAAEATEAPAEA.

The span at 149-161 (EKKAAEAAAKAEA) shows a compositional bias: basic and acidic residues. Residues 149 to 183 (EKKAAEAAAKAEAEAANAPAEEAPAAEATEAPAEA) are disordered. Positions 162–183 (EAANAPAEEAPAAEATEAPAEA) are enriched in low complexity.

The protein belongs to the bacterial ribosomal protein bS16 family.

The protein is Small ribosomal subunit protein bS16 of Phocaeicola vulgatus (strain ATCC 8482 / DSM 1447 / JCM 5826 / CCUG 4940 / NBRC 14291 / NCTC 11154) (Bacteroides vulgatus).